We begin with the raw amino-acid sequence, 345 residues long: Aurora kinase B (345 aa).

The segment at 1-25 (MAQKENAYPWPYGSKTSQSGLNTLS) is disordered. Residues 14-25 (SKTSQSGLNTLS) are compositionally biased toward polar residues. Thr-35 carries the post-translational modification Phosphothreonine. The segment at 50–77 (TAAPGQKLAENKSQGSTASQGSQNKQPF) is disordered. Over residues 60 to 77 (NKSQGSTASQGSQNKQPF) the composition is skewed to polar residues. Ser-62 carries the post-translational modification Phosphoserine. Residues 82–332 (FEIGRPLGKG…LAEVAAHPWV (251 aa)) form the Protein kinase domain. Residues 88-96 (LGKGKFGNV) and Lys-111 each bind ATP. Asp-205 acts as the Proton acceptor in catalysis. Lys-220 bears the N6-acetyllysine mark. Residue Ser-232 is modified to Phosphoserine. The residue at position 237 (Thr-237) is a Phosphothreonine; by autocatalysis.

The protein belongs to the protein kinase superfamily. Ser/Thr protein kinase family. Aurora subfamily. Component of the chromosomal passenger complex (CPC) composed of at least BIRC5/survivin, CDCA8/borealin, INCENP, AURKB or AURKC; predominantly independent AURKB- and AURKC-containing complexes exist. Associates with RACGAP1 during M phase. Interacts with SPDYC; this interaction may be required for proper localization of active, Thr-237-phosphorylated AURKB form during prometaphase and metaphase. Interacts with p53/TP53. Interacts (via the middle kinase domain) with NOC2L (via the N- and C-terminus domains). Interacts with CDCA1. Interacts with EVI5. Interacts with JTB. Interacts with NDC80. Interacts with PSMA3. Interacts with RNF2/RING1B. Interacts with SEPTIN1. Interacts with SIRT2. Interacts with TACC1. Interacts with TTC28. In terms of processing, the phosphorylation of Thr-237 requires the binding to INCENP and occurs by means of an autophosphorylation mechanism. Thr-237 phosphorylation is indispensable for the AURKB kinase activity. Post-translationally, acetylated at Lys-220 by KAT5 at kinetochores, increasing AURKB activity and promoting accurate chromosome segregation in mitosis. Ubiquitinated by different BCR (BTB-CUL3-RBX1) E3 ubiquitin ligase complexes. Ubiquitinated by the BCR(KLHL9-KLHL13) E3 ubiquitin ligase complex, ubiquitination leads to removal from mitotic chromosomes and is required for cytokinesis. During anaphase, the BCR(KLHL21) E3 ubiquitin ligase complex recruits the CPC complex from chromosomes to the spindle midzone and mediates the ubiquitination of AURKB. Ubiquitination of AURKB by BCR(KLHL21) E3 ubiquitin ligase complex may not lead to its degradation by the proteasome. Deubiquitinated by USP35; inhibiting CDH1-mediated degradation of AURKB. In terms of tissue distribution, expressed in testis, intestine and spleen. All of them are tissues that contain a large number of proliferating cells. Expressed during S phase, in a cell-cycle-dependent fashion.

Its subcellular location is the nucleus. It is found in the chromosome. The protein resides in the centromere. The protein localises to the kinetochore. It localises to the cytoplasm. Its subcellular location is the cytoskeleton. It is found in the spindle. The protein resides in the midbody. It catalyses the reaction L-seryl-[protein] + ATP = O-phospho-L-seryl-[protein] + ADP + H(+). The catalysed reaction is L-threonyl-[protein] + ATP = O-phospho-L-threonyl-[protein] + ADP + H(+). Activity is greatly increased when AURKB is within the CPC complex. In particular, AURKB-phosphorylated INCENP acts as an activator of AURKB. Positive feedback between HASPIN and AURKB contributes to CPC localization. Functionally, serine/threonine-protein kinase component of the chromosomal passenger complex (CPC), a complex that acts as a key regulator of mitosis. The CPC complex has essential functions at the centromere in ensuring correct chromosome alignment and segregation and is required for chromatin-induced microtubule stabilization and spindle assembly. Involved in the bipolar attachment of spindle microtubules to kinetochores and is a key regulator for the onset of cytokinesis during mitosis. Required for central/midzone spindle assembly and cleavage furrow formation. Key component of the cytokinesis checkpoint, a process required to delay abscission to prevent both premature resolution of intercellular chromosome bridges and accumulation of DNA damage: phosphorylates CHMP4C, leading to retain abscission-competent VPS4 (VPS4A and/or VPS4B) at the midbody ring until abscission checkpoint signaling is terminated at late cytokinesis. AURKB phosphorylates the CPC complex subunits BIRC5/survivin, CDCA8/borealin and INCENP. Phosphorylation of INCENP leads to increased AURKB activity. Other known AURKB substrates involved in centromeric functions and mitosis are CENPA, DES/desmin, GPAF, KIF2C, NSUN2, RACGAP1, SEPTIN1, VIM/vimentin, HASPIN, and histone H3. A positive feedback loop involving HASPIN and AURKB contributes to localization of CPC to centromeres. Phosphorylation of VIM controls vimentin filament segregation in cytokinetic process, whereas histone H3 is phosphorylated at 'Ser-10' and 'Ser-28' during mitosis (H3S10ph and H3S28ph, respectively). AURKB is also required for kinetochore localization of BUB1 and SGO1. Phosphorylation of p53/TP53 negatively regulates its transcriptional activity. Key regulator of active promoters in resting B- and T-lymphocytes: acts by mediating phosphorylation of H3S28ph at active promoters in resting B-cells, inhibiting RNF2/RING1B-mediated ubiquitination of histone H2A and enhancing binding and activity of the USP16 deubiquitinase at transcribed genes. Acts as an inhibitor of CGAS during mitosis: catalyzes phosphorylation of the N-terminus of CGAS during the G2-M transition, blocking CGAS liquid phase separation and activation, and thereby preventing CGAS-induced autoimmunity. Phosphorylates KRT5 during anaphase and telophase. Phosphorylates ATXN10 which promotes phosphorylation of ATXN10 by PLK1 and may play a role in the regulation of cytokinesis and stimulating the proteasomal degradation of ATXN10. The chain is Aurora kinase B (Aurkb) from Mus musculus (Mouse).